The following is a 530-amino-acid chain: UDP-glucuronosyltransferase 2B17 (530 aa).

Positions 1-23 (MPGKWISALLLLQISCCFRSVKC) are cleaved as a signal peptide. N-linked (GlcNAc...) asparagine glycosylation is found at Asn316 and Asn483. A helical membrane pass occupies residues 494 to 510 (VIGFLLSCVATTIVLSV).

This sequence belongs to the UDP-glycosyltransferase family.

It is found in the endoplasmic reticulum membrane. It carries out the reaction glucuronate acceptor + UDP-alpha-D-glucuronate = acceptor beta-D-glucuronoside + UDP + H(+). The catalysed reaction is 17alpha-estradiol + UDP-alpha-D-glucuronate = 17alpha-estradiol 3-O-(beta-D-glucuronate) + UDP + H(+). It catalyses the reaction 17alpha-estradiol + UDP-alpha-D-glucuronate = 17alpha-estradiol 17-O-(beta-D-glucuronate) + UDP + H(+). The enzyme catalyses 17beta-estradiol + UDP-alpha-D-glucuronate = 17beta-estradiol 17-O-(beta-D-glucuronate) + UDP + H(+). It carries out the reaction 17beta-hydroxy-5alpha-androstan-3-one + UDP-alpha-D-glucuronate = 5alpha-dihydrotestosterone 17-O-(beta-D-glucuronate) + UDP + H(+). The catalysed reaction is testosterone + UDP-alpha-D-glucuronate = testosterone 17-O-(beta-D-glucuronate) + UDP + H(+). Functionally, UDP-glucuronosyltransferase (UGT) that catalyzes phase II biotransformation reactions in which lipophilic substrates are conjugated with glucuronic acid to increase the metabolite's water solubility, thereby facilitating excretion into either the urine or bile. Catalyzes the glucuronidation of endogenous steroid hormones such as androgens (epitestosterone, androsterone) and estrogens (estradiol, epiestradiol). The protein is UDP-glucuronosyltransferase 2B17 of Mus musculus (Mouse).